The following is a 472-amino-acid chain: Eukaryotic translation initiation factor 2 subunit 3, X-linked (472 aa).

The residue at position 2 (Ala2) is an N-acetylalanine. Ser16 carries the phosphoserine modification. Positions 39–248 (QATINIGTIG…IVKKIPVPPR (210 aa)) constitute a tr-type G domain. The interval 48–55 (GHVAHGKS) is G1. 51-56 (AHGKST) contributes to the GTP binding site. The G2 stretch occupies residues 76–80 (NITIK). The segment at 134–137 (DCPG) is G3. Residues 190–193 (NKID) and 225–227 (SAQ) contribute to the GTP site. The tract at residues 190-193 (NKID) is G4. The tract at residues 225-227 (SAQ) is G5. The interacts with Cdc123 stretch occupies residues 457–469 (GQIRRGVTIKPTV).

Belongs to the TRAFAC class translation factor GTPase superfamily. Classic translation factor GTPase family. EIF2G subfamily. In terms of assembly, eukaryotic translation initiation factor 2 eIF2 is a heterotrimeric complex composed of an alpha (EIF2S1), a beta (EIF2S2) and a gamma (EIF2S3) chain. eIF2 is member of the 43S pre-initiation complex (43S PIC). Interacts (via C-terminus) with CDC123; the interaction is direct. In terms of tissue distribution, widely expressed. In the brain, high mRNA levels are observed in specific regions, including the habenula, anterodorsal thalamic nucleus, hippocampus, hypothalamus, and cerebellum. Also expressed in the embryonic brain. There is a differential expression between males and females, which is tissue-specific. Females tend to have higher expression levels than males in the brain (cortex, hippocampus and paraventricular nucleus, but not in the habenula), as well as in other tissues. The up-regulation observed in females at the mRNA level may be due to the presence of 2 active copies of the gene.

Its subcellular location is the cytoplasm. The protein resides in the cytosol. The catalysed reaction is GTP + H2O = GDP + phosphate + H(+). Member of the eIF2 complex that functions in the early steps of protein synthesis by forming a ternary complex with GTP and initiator tRNA. This complex binds to a 40S ribosomal subunit, followed by mRNA binding to form the 43S pre-initiation complex (43S PIC). Junction of the 60S ribosomal subunit to form the 80S initiation complex is preceded by hydrolysis of the GTP bound to eIF2 and release of an eIF2-GDP binary complex. In order for eIF2 to recycle and catalyze another round of initiation, the GDP bound to eIF2 must exchange with GTP by way of a reaction catalyzed by eIF-2B. Along with its paralog on chromosome Y, may contribute to spermatogenesis up to the round spermatid stage. The chain is Eukaryotic translation initiation factor 2 subunit 3, X-linked (Eif2s3x) from Mus musculus (Mouse).